The following is a 600-amino-acid chain: MAVSTQQLAEELQIFGLDYEDSLLEKLAELCVLYRQTEDGMVSELIAFCTSAGKTCLTVDILNSFEYEVLNKKLSKAWHSASKDSGHAGTRDIVSIQELIEAEEEEETLLSSYTTPSKGPLKRVSSTPETPLTKRSVAARSPRQLLSPSSFSPSATPSQKYTSRTNRGEVVTTFGSAQGLSWSGRGGSGSVSLKVVGDPEPLTGSYKAMFQQLMGVREVLTSKIEELGSELKEHHKIEAFTPLLVPAQEPVILLGQIGCDSNGKLNSKSVILEGDQEHSYGAQIPVDLSELKEYSLFPGQVVIMEGFNTTGRRLTATKLYEGVPLPFYQPTEEEGASEQTMVVVACGPYTTSDSITYDPLLDLIAIINRDQPDVCILFGPFLDAKHEQVENCKLTSPFEDVFKQCLRTVIEGTRSSGSHLVFVPSLRDVHHEPVYPQPPFTFSELSREDKKRVQFVSEPCSLSINGVMFGLTSTDLLFHIGAEEIFSSSGTSDRFSRVLKHILTQRSYYPLYPPHEDMAIDYENFYTYAQLPVTPDVFIVPSELRYFVKDIFGCVCVNPGRLTKGQVGGTFGRLYLRRQPKAMDGGGRQGLSVAAQVVRI.

Residues 107–165 (ETLLSSYTTPSKGPLKRVSSTPETPLTKRSVAARSPRQLLSPSSFSPSATPSQKYTSRT) are disordered. Serine 126 is subject to Phosphoserine. Phosphothreonine occurs at positions 127 and 130. Positions 139–159 (ARSPRQLLSPSSFSPSATPSQ) are enriched in low complexity. Serine 141, serine 147, serine 152, and serine 154 each carry phosphoserine.

It belongs to the DNA polymerase alpha subunit B family. As to quaternary structure, component of the alpha DNA polymerase complex (also known as the alpha DNA polymerase-primase complex) consisting of four subunits: the catalytic subunit POLA1, the regulatory subunit POLA2, and the primase complex subunits PRIM1 and PRIM2 respectively. Within the complex, POLA1 directly interacts with PRIM2. Phosphorylated in a cell cycle-dependent manner, in G2/M phase.

Its subcellular location is the nucleus. Accessory subunit of the DNA polymerase alpha complex (also known as the alpha DNA polymerase-primase complex) which plays an essential role in the initiation of DNA synthesis. During the S phase of the cell cycle, the DNA polymerase alpha complex (composed of a catalytic subunit POLA1, an accessory subunit POLA2 and two primase subunits, the catalytic subunit PRIM1 and the regulatory subunit PRIM2) is recruited to DNA at the replicative forks via direct interactions with MCM10 and WDHD1. The primase subunit of the polymerase alpha complex initiates DNA synthesis by oligomerising short RNA primers on both leading and lagging strands. These primers are initially extended by the polymerase alpha catalytic subunit and subsequently transferred to polymerase delta and polymerase epsilon for processive synthesis on the lagging and leading strand, respectively. This chain is DNA polymerase alpha subunit B (Pola2), found in Mus musculus (Mouse).